Reading from the N-terminus, the 353-residue chain is Phospho-N-acetylmuramoyl-pentapeptide-transferase (353 aa).

10 helical membrane passes run 22 to 42 (FAFF…ITWA), 65 to 85 (TPTM…LFCI), 88 to 108 (DNIF…IGLI), 129 to 149 (LLAQ…SSEL), 161 to 181 (PLFD…ISSS), 192 to 212 (GLAT…LYLS), 228 to 248 (GLGE…GFLW), 256 to 276 (VFMG…LAII), 281 to 301 (ILLL…ILQV), and 330 to 350 (KIIV…LASI).

This sequence belongs to the glycosyltransferase 4 family. MraY subfamily. It depends on Mg(2+) as a cofactor.

The protein localises to the cell inner membrane. The catalysed reaction is UDP-N-acetyl-alpha-D-muramoyl-L-alanyl-gamma-D-glutamyl-meso-2,6-diaminopimeloyl-D-alanyl-D-alanine + di-trans,octa-cis-undecaprenyl phosphate = di-trans,octa-cis-undecaprenyl diphospho-N-acetyl-alpha-D-muramoyl-L-alanyl-D-glutamyl-meso-2,6-diaminopimeloyl-D-alanyl-D-alanine + UMP. It participates in cell wall biogenesis; peptidoglycan biosynthesis. In terms of biological role, catalyzes the initial step of the lipid cycle reactions in the biosynthesis of the cell wall peptidoglycan: transfers peptidoglycan precursor phospho-MurNAc-pentapeptide from UDP-MurNAc-pentapeptide onto the lipid carrier undecaprenyl phosphate, yielding undecaprenyl-pyrophosphoryl-MurNAc-pentapeptide, known as lipid I. The protein is Phospho-N-acetylmuramoyl-pentapeptide-transferase of Campylobacter jejuni (strain RM1221).